An 831-amino-acid polypeptide reads, in one-letter code: MASKTTSEELKTATALKKRSSDVHAVDHSGNVYKGFQIWTDLAPSVKEEPDLMFAKCIVQAGTDKGNLTCVQIDPPGFDEPFEVPQANAWNVNSLIDPMTYGDIGMLPHTNIPCVLDFLKVRFMKNQIYTTADPLVVAINPFRDLGNTTLDWIVRYRDTFDLSKLAPHVFYTARRALDNLHAVNKSQTIIVSGESGAGKTEATKQIMRYFAAAKTGSMDLRIQNAIMAANPVLEAFGNAKTIRNNNSSRFGRFMQLDVGREGGIKFGSVVAFLLEKSRVLTQDEQERSYHIFYQMCKGADAAMKERFHILPLSEYKYINPLCLDAPGIDDVAEFHEVCESFRSMNLTEDEVASVWSIVSGVLLLGNVEVTATKDGGIDDAAAIEGKNLEVFKKACGLLFLDAERIREELTVKVSYAGNQEIRGRWKQEDGDMLKSSLAKAMYDKLFMWIIAVLNRSIKPPGGFKIFMGMLDIFGFEVFKNNSLEQFFINITNEMLQKNFVDIVFDRESKLYRDEGVSSKELIFTSNAEVIKILTAKNNSVLAALEDQCLAPGGSDEKFLSTCKNALKGTTKFKPAKVSPNINFLISHTVGDIQYNAEGFLFKNKDVLRAEIMEIVQQSKNPVVAQLFAGIVMEKGKMAKGQLIGSQFLSQLQSLMELINSTEPHFIRCIKPNDTKKPLDWVPSKMLIQLHALSVLEALQLRQLGYSYRRPFKEFLFQFKFIDLSASENPNLDPKEAALRLLKSSKLPSEEYQLGKTMVFLKQTGAKELTQIQRECLSSWEPLVSVLEAYYAGRRHKKQLLKKTPFIIRAQAHIRRHLVDNNVSPATVQPAF.

A Myosin motor domain is found at 99 to 773 (MTYGDIGMLP…GAKELTQIQR (675 aa)). 193–200 (GESGAGKT) serves as a coordination point for ATP. The segment at 663 to 673 (PHFIRCIKPND) is actin-binding. The tract at residues 775–831 (CLSSWEPLVSVLEAYYAGRRHKKQLLKKTPFIIRAQAHIRRHLVDNNVSPATVQPAF) is tail.

Belongs to the TRAFAC class myosin-kinesin ATPase superfamily. Myosin family.

Its subcellular location is the cell membrane. Its function is as follows. Myosins are actin-based motor molecules with ATPase activity. Unconventional myosins serve in intracellular movements. Their highly divergent tails are presumed to bind to membranous compartments, which would be moved relative to actin filaments. The sequence is that of Myosin-A from Toxoplasma gondii.